A 491-amino-acid chain; its full sequence is Iota-carrageenase (491 aa).

The N-terminal stretch at 1–19 (MKLQFKPVYLASIAIMAIG) is a signal peptide. Cysteine 422 and cysteine 490 are oxidised to a cystine.

It belongs to the glycosyl hydrolase 82 family.

Its subcellular location is the secreted. The catalysed reaction is Endohydrolysis of 1,4-beta-D-linkages between D-galactose 4-sulfate and 3,6-anhydro-D-galactose-2-sulfate in iota-carrageenans.. Functionally, hydrolyzes iota-carrageenans, sulfated 1,3-alpha-1,4-beta galactans from red algal cell walls, with an inversion of anomeric configuration. Also active against hybrid iota-/nu-carrageenan, not active against kappa- or lambda-carrageenans. This is Iota-carrageenase from Zobellia galactanivorans (strain DSM 12802 / CCUG 47099 / CIP 106680 / NCIMB 13871 / Dsij).